Consider the following 2215-residue polypeptide: Unconventional myosin-VIIa (2215 aa).

The region spanning 65 to 741 is the Myosin motor domain; it reads HGVEDMIRLG…HDMLLEVERD (677 aa). An ATP-binding site is contributed by 158-165; sequence GESGAGKT. The interval 632–639 is actin-binding; sequence FVRCIKPN. 5 consecutive IQ domains span residues 745–765, 768–788, 791–811, 814–834, and 837–857; these read TDRV…SNFL, KNAA…KNYG, RLGF…QQYR, RQRI…KAFR, and LWAV…RLHQ. Residues 858–935 form an SAH region; sequence RLRAEYLWRL…LEQMERARHE (78 aa). In terms of domain architecture, MyTH4 1 spans 1017–1253; it reads YTRRPLKQPL…PSWLELQATK (237 aa). The FERM 1 domain occupies 1258-1602; the sequence is IMLPVTFMDG…LVVTFLEGLR (345 aa). Serine 1569 carries the post-translational modification Phosphoserine. Threonine 1571 is modified (phosphothreonine). In terms of domain architecture, SH3 spans 1603–1672; it reads KRSKYVVALQ…PTDSVYVMPT (70 aa). One can recognise a MyTH4 2 domain in the interval 1747–1896; that stretch reads HTREPLKQAL…PHLVEVEAIQ (150 aa). An FERM 2 domain is found at 1902–2205; it reads IFHKVYFPDD…SYISQMLTAM (304 aa).

Belongs to the TRAFAC class myosin-kinesin ATPase superfamily. Myosin family. As to quaternary structure, might homodimerize in a two headed molecule through the formation of a coiled-coil rod. Identified in a complex with USH1C and USH1G. Interacts with MYRIP. Interacts with RPE65. Interacts with CIB2. May interact with CALM. Interacts with WHRN. Interacts with PLEKHB1 (via PH domain). Interacts with PCDH15. Interacts with TWF2. Interacts with USH1G. Interacts with MYH9. Interacts (via MyTH4-FERM domains) with cytoplasmic regions of ADGRV1 and USH2A. Interacts with PDZD7 (via MyTH4-FERM domains). Interacts with CALML4. Expressed in the pigment epithelium and the photoreceptor cells of the retina. Also found in kidney, liver, testis, cochlea, lymphocytes. Not expressed in brain.

It localises to the cytoplasm. It is found in the cell cortex. The protein resides in the cytoskeleton. Its subcellular location is the synapse. With respect to regulation, ATP hydrolysis is inhibited by Mg(2+), already at a concentration of 0.4 mM. Its function is as follows. Myosins are actin-based motor molecules with ATPase activity. Unconventional myosins serve in intracellular movements. Their highly divergent tails bind to membranous compartments, which are then moved relative to actin filaments. In the retina, plays an important role in the renewal of the outer photoreceptor disks. Plays an important role in the distribution and migration of retinal pigment epithelial (RPE) melanosomes and phagosomes, and in the regulation of opsin transport in retinal photoreceptors. In the inner ear, plays an important role in differentiation, morphogenesis and organization of cochlear hair cell bundles. Involved in hair-cell vesicle trafficking of aminoglycosides, which are known to induce ototoxicity. Motor protein that is a part of the functional network formed by USH1C, USH1G, CDH23 and MYO7A that mediates mechanotransduction in cochlear hair cells. Required for normal hearing. The sequence is that of Unconventional myosin-VIIa from Homo sapiens (Human).